The primary structure comprises 62 residues: Sperm protamine P1 (62 aa).

A disordered region spans residues 1–62 (MARCRRHSRS…RYSRRGRRRY (62 aa)).

This sequence belongs to the protamine P1 family. Testis.

The protein localises to the nucleus. It is found in the chromosome. Functionally, protamines substitute for histones in the chromatin of sperm during the haploid phase of spermatogenesis. They compact sperm DNA into a highly condensed, stable and inactive complex. The chain is Sperm protamine P1 (PRM1) from Planigale maculata sinualis (Common planigale).